Reading from the N-terminus, the 573-residue chain is WRKY transcription factor SUSIBA2 (573 aa).

Disordered regions lie at residues 56–133 and 157–192; these read AHPD…CSRE and PAEV…DDGY. Residues 64-85 are compositionally biased toward basic and acidic residues; it reads PRDKSVRNAHEDRGSRDFEFKP. The span at 108-122 shows a compositional bias: low complexity; that stretch reads MQNQSMNPSSSSSNM. Positions 163–182 are enriched in polar residues; sequence SEPQQMNSSDNAMQEPQSEN. The span at 183-192 shows a compositional bias: basic and acidic residues; the sequence is VADKSADDGY. Positions 183–247 form a DNA-binding region, WRKY 1; the sequence is VADKSADDGY…YKGRHNHPKP (65 aa). Zn(2+) is bound by residues Cys214, Cys219, His242, and His244. The tract at residues 240-332 is disordered; the sequence is GRHNHPKPQP…EDLESKRRKM (93 aa). A compositionally biased stretch (basic and acidic residues) spans 263-277; the sequence is GEERYDGASAADDKS. The segment at residues 357–422 is a DNA-binding region (WRKY 2); the sequence is SEVDILDDGY…YEGKHNHEVP (66 aa). 4 residues coordinate Zn(2+): Cys388, Cys393, His417, and His419.

The protein belongs to the WRKY group I family. In terms of tissue distribution, expressed in endosperm, but not in leaves.

It is found in the nucleus. Transcription factor involved in starch synthesis. Acts as a transcriptional activator in sugar signaling. Interacts specifically with the SURE and W-box elements, but not with the SP8a element. The sequence is that of WRKY transcription factor SUSIBA2 from Hordeum vulgare (Barley).